The chain runs to 327 residues: tRNA-dihydrouridine(20/20a) synthase (327 aa).

FMN is bound by residues Pro11–Leu13 and Gln63. Catalysis depends on Cys93, which acts as the Proton donor. Residues Lys132, His165, Asn205–Gly207, and Gly227–Arg228 contribute to the FMN site.

This sequence belongs to the Dus family. DusA subfamily. The cofactor is FMN.

It catalyses the reaction 5,6-dihydrouridine(20) in tRNA + NADP(+) = uridine(20) in tRNA + NADPH + H(+). The catalysed reaction is 5,6-dihydrouridine(20) in tRNA + NAD(+) = uridine(20) in tRNA + NADH + H(+). It carries out the reaction 5,6-dihydrouridine(20a) in tRNA + NADP(+) = uridine(20a) in tRNA + NADPH + H(+). The enzyme catalyses 5,6-dihydrouridine(20a) in tRNA + NAD(+) = uridine(20a) in tRNA + NADH + H(+). Functionally, catalyzes the synthesis of 5,6-dihydrouridine (D), a modified base found in the D-loop of most tRNAs, via the reduction of the C5-C6 double bond in target uridines. Specifically modifies U20 and U20a in tRNAs. In Vibrio cholerae serotype O1 (strain ATCC 39315 / El Tor Inaba N16961), this protein is tRNA-dihydrouridine(20/20a) synthase.